The following is a 122-amino-acid chain: Fluoride-specific ion channel FluC (122 aa).

Helical transmembrane passes span 1-21, 34-54, 60-80, and 100-120; these read MIGTILAVGFGGFLGAISRML, FPYGTLLVNIIGSFLMGLFFS, GVHIFTKSLISTGFLSAFTTF, and FLNIILNVILCLLAVWIGFLI.

Belongs to the fluoride channel Fluc/FEX (TC 1.A.43) family.

Its subcellular location is the cell inner membrane. It catalyses the reaction fluoride(in) = fluoride(out). Fluoride-specific ion channel. Important for reducing fluoride concentration in the cell, thus reducing its toxicity. This chain is Fluoride-specific ion channel FluC, found in Campylobacter lari (strain RM2100 / D67 / ATCC BAA-1060).